The primary structure comprises 955 residues: 2-oxoglutarate dehydrogenase E1 component (955 aa).

The protein belongs to the alpha-ketoglutarate dehydrogenase family. Homodimer. Part of the 2-oxoglutarate dehydrogenase (OGDH) complex composed of E1 (2-oxoglutarate dehydrogenase), E2 (dihydrolipoamide succinyltransferase) and E3 (dihydrolipoamide dehydrogenase); the complex contains multiple copies of the three enzymatic components (E1, E2 and E3). It depends on thiamine diphosphate as a cofactor.

The enzyme catalyses N(6)-[(R)-lipoyl]-L-lysyl-[protein] + 2-oxoglutarate + H(+) = N(6)-[(R)-S(8)-succinyldihydrolipoyl]-L-lysyl-[protein] + CO2. In terms of biological role, E1 component of the 2-oxoglutarate dehydrogenase (OGDH) complex which catalyzes the decarboxylation of 2-oxoglutarate, the first step in the conversion of 2-oxoglutarate to succinyl-CoA and CO(2). The chain is 2-oxoglutarate dehydrogenase E1 component from Bacillus cereus (strain ATCC 10987 / NRS 248).